Reading from the N-terminus, the 64-residue chain is Small ribosomal subunit protein eS17 (64 aa).

It belongs to the eukaryotic ribosomal protein eS17 family.

The sequence is that of Small ribosomal subunit protein eS17 from Methanococcoides burtonii (strain DSM 6242 / NBRC 107633 / OCM 468 / ACE-M).